Here is a 347-residue protein sequence, read N- to C-terminus: MAIDEDKQKAISLAIKQIDKIFGKGALVRLGDKQVEKIDSISTGSLGLDLALGIGGVPKGRIIEIYGPESSGKTTLSLHIIAECQKNGGVCAFIDAEHALDVHYAKRLGVDTENLLVSQPDTGEQALEILETITRSGGIDLVVVDSVAALTPKAEIDGDMGDQHVGLQARLMSHALRKITGVLHKMNTTLIFINQIRMKIGMMGYGSPETTTGGNALKFYASVRIDIRRIAALKQNEQHIGNRAKAKVVKNKVAPPFREAEFDIMFGEGISKEGEIIDYGVKLDIVDKSGAWLSYQDKKLGQGRENAKALLKEDKALANEITLKIKESIGSNEEIMPLPDEPLEEME.

67–74 (GPESSGKT) provides a ligand contact to ATP.

Belongs to the RecA family.

The protein resides in the cytoplasm. In terms of biological role, can catalyze the hydrolysis of ATP in the presence of single-stranded DNA, the ATP-dependent uptake of single-stranded DNA by duplex DNA, and the ATP-dependent hybridization of homologous single-stranded DNAs. It interacts with LexA causing its activation and leading to its autocatalytic cleavage. The protein is Protein RecA of Helicobacter pylori (strain Shi470).